We begin with the raw amino-acid sequence, 132 residues long: Ribosome-binding factor A (132 aa).

The protein belongs to the RbfA family. Monomer. Binds 30S ribosomal subunits, but not 50S ribosomal subunits or 70S ribosomes.

It localises to the cytoplasm. Its function is as follows. One of several proteins that assist in the late maturation steps of the functional core of the 30S ribosomal subunit. Associates with free 30S ribosomal subunits (but not with 30S subunits that are part of 70S ribosomes or polysomes). Required for efficient processing of 16S rRNA. May interact with the 5'-terminal helix region of 16S rRNA. The polypeptide is Ribosome-binding factor A (Pectobacterium atrosepticum (strain SCRI 1043 / ATCC BAA-672) (Erwinia carotovora subsp. atroseptica)).